Reading from the N-terminus, the 450-residue chain is Oxygen-independent coproporphyrinogen III oxidase (450 aa).

The Radical SAM core domain maps to 42–276 (LPAGASASLY…CAIANALKEA (235 aa)). S-adenosyl-L-methionine is bound at residue tyrosine 51. Residues cysteine 57 and cysteine 61 each coordinate [4Fe-4S] cluster. Tyrosine 63 is a binding site for S-adenosyl-L-methionine. Cysteine 64 is a [4Fe-4S] cluster binding site. Residues glycine 108, 109 to 110 (GT), glutamate 141, glutamine 168, arginine 180, aspartate 205, alanine 239, and isoleucine 325 contribute to the S-adenosyl-L-methionine site.

The protein belongs to the anaerobic coproporphyrinogen-III oxidase family. In terms of assembly, monomer. [4Fe-4S] cluster serves as cofactor.

It is found in the cytoplasm. It catalyses the reaction coproporphyrinogen III + 2 S-adenosyl-L-methionine = protoporphyrinogen IX + 2 5'-deoxyadenosine + 2 L-methionine + 2 CO2. Its pathway is porphyrin-containing compound metabolism; protoporphyrin-IX biosynthesis; protoporphyrinogen-IX from coproporphyrinogen-III (AdoMet route): step 1/1. Its function is as follows. Involved in the heme biosynthesis. Catalyzes the anaerobic oxidative decarboxylation of propionate groups of rings A and B of coproporphyrinogen III to yield the vinyl groups in protoporphyrinogen IX. This Bradyrhizobium diazoefficiens (strain JCM 10833 / BCRC 13528 / IAM 13628 / NBRC 14792 / USDA 110) protein is Oxygen-independent coproporphyrinogen III oxidase (hemN).